A 98-amino-acid polypeptide reads, in one-letter code: NADH-ubiquinone oxidoreductase chain 4L (98 aa).

The next 3 membrane-spanning stretches (helical) occupy residues 1 to 21 (MIPTYMNIMLAFTISLLGMLI), 29 to 49 (SLLCLEGMMMSLFIMTTLIAL), and 61 to 81 (IILLVFAACEAAVGLALLVSI).

Belongs to the complex I subunit 4L family. Core subunit of respiratory chain NADH dehydrogenase (Complex I) which is composed of 45 different subunits.

It is found in the mitochondrion inner membrane. It carries out the reaction a ubiquinone + NADH + 5 H(+)(in) = a ubiquinol + NAD(+) + 4 H(+)(out). In terms of biological role, core subunit of the mitochondrial membrane respiratory chain NADH dehydrogenase (Complex I) which catalyzes electron transfer from NADH through the respiratory chain, using ubiquinone as an electron acceptor. Part of the enzyme membrane arm which is embedded in the lipid bilayer and involved in proton translocation. This chain is NADH-ubiquinone oxidoreductase chain 4L (MT-ND4L), found in Macaca ochreata (Booted macaque).